The primary structure comprises 157 residues: Beta-defensin 125 (157 aa).

Positions Met1–Gly20 are cleaved as a signal peptide. Cystine bridges form between Cys27-Cys55, Cys35-Cys49, and Cys39-Cys56. A disordered region spans residues Gly109–Asn157. Low complexity predominate over residues Glu110–Thr140. Residues Ala141–Asn157 show a composition bias toward polar residues.

Belongs to the beta-defensin family.

It is found in the secreted. Has antibacterial activity. This is Beta-defensin 125 (DEFB125) from Pongo pygmaeus (Bornean orangutan).